A 302-amino-acid polypeptide reads, in one-letter code: ATP synthase gamma chain (302 aa).

It belongs to the ATPase gamma chain family. F-type ATPases have 2 components, CF(1) - the catalytic core - and CF(0) - the membrane proton channel. CF(1) has five subunits: alpha(3), beta(3), gamma(1), delta(1), epsilon(1). CF(0) has three main subunits: a, b and c.

It localises to the cell inner membrane. Its function is as follows. Produces ATP from ADP in the presence of a proton gradient across the membrane. The gamma chain is believed to be important in regulating ATPase activity and the flow of protons through the CF(0) complex. This is ATP synthase gamma chain from Bartonella bacilliformis (strain ATCC 35685 / KC583 / Herrer 020/F12,63).